The chain runs to 365 residues: uncharacterized protein (365 aa).

3 helical membrane passes run 105-125, 151-171, and 187-207; these read TGNW…QCWL, ILTT…SLTI, and IFLI…SLIF.

The protein resides in the cell membrane. This is an uncharacterized protein from Mycoplasma genitalium (strain ATCC 33530 / DSM 19775 / NCTC 10195 / G37) (Mycoplasmoides genitalium).